Reading from the N-terminus, the 213-residue chain is Orotate phosphoribosyltransferase (213 aa).

Lys26 is a 5-phospho-alpha-D-ribose 1-diphosphate binding site. Residue 34 to 35 (FF) coordinates orotate. Residues 72 to 73 (YK), Arg99, Lys100, Lys103, His105, and 124 to 132 (DDVITAGTA) each bind 5-phospho-alpha-D-ribose 1-diphosphate. Residues Thr128 and Arg156 each contribute to the orotate site.

Belongs to the purine/pyrimidine phosphoribosyltransferase family. PyrE subfamily. In terms of assembly, homodimer. The cofactor is Mg(2+).

It carries out the reaction orotidine 5'-phosphate + diphosphate = orotate + 5-phospho-alpha-D-ribose 1-diphosphate. The protein operates within pyrimidine metabolism; UMP biosynthesis via de novo pathway; UMP from orotate: step 1/2. In terms of biological role, catalyzes the transfer of a ribosyl phosphate group from 5-phosphoribose 1-diphosphate to orotate, leading to the formation of orotidine monophosphate (OMP). This is Orotate phosphoribosyltransferase from Aliivibrio fischeri (strain MJ11) (Vibrio fischeri).